The primary structure comprises 129 residues: Glycine cleavage system H protein (129 aa).

One can recognise a Lipoyl-binding domain in the interval 24–106; that stretch reads SYTVGITEHA…YGEGWFFRVM (83 aa). Position 65 is an N6-lipoyllysine (K65).

This sequence belongs to the GcvH family. In terms of assembly, the glycine cleavage system is composed of four proteins: P, T, L and H. (R)-lipoate is required as a cofactor.

Functionally, the glycine cleavage system catalyzes the degradation of glycine. The H protein shuttles the methylamine group of glycine from the P protein to the T protein. The protein is Glycine cleavage system H protein of Shewanella putrefaciens (strain CN-32 / ATCC BAA-453).